The sequence spans 117 residues: Ribulose bisphosphate carboxylase small subunit 1 (117 aa).

It belongs to the RuBisCO small chain family. In terms of assembly, heterohexadecamer of 8 large and 8 small subunits.

Functionally, ruBisCO catalyzes two reactions: the carboxylation of D-ribulose 1,5-bisphosphate, the primary event in carbon dioxide fixation, as well as the oxidative fragmentation of the pentose substrate. Both reactions occur simultaneously and in competition at the same active site. Although the small subunit is not catalytic it is essential for maximal activity. This is Ribulose bisphosphate carboxylase small subunit 1 from Hydrogenovibrio marinus.